We begin with the raw amino-acid sequence, 49 residues long: Large ribosomal subunit protein bL33A (49 aa).

Belongs to the bacterial ribosomal protein bL33 family.

In Mycoplasmopsis agalactiae (strain NCTC 10123 / CIP 59.7 / PG2) (Mycoplasma agalactiae), this protein is Large ribosomal subunit protein bL33A.